A 141-amino-acid polypeptide reads, in one-letter code: Galactose-6-phosphate isomerase subunit LacA (141 aa).

It belongs to the LacAB/RpiB family. Heteromultimeric protein consisting of LacA and LacB.

It catalyses the reaction aldehydo-D-galactose 6-phosphate = keto-D-tagatose 6-phosphate. It functions in the pathway carbohydrate metabolism; D-galactose 6-phosphate degradation; D-tagatose 6-phosphate from D-galactose 6-phosphate: step 1/1. The protein is Galactose-6-phosphate isomerase subunit LacA of Streptococcus equi subsp. zooepidemicus (strain MGCS10565).